A 171-amino-acid chain; its full sequence is T-cell surface glycoprotein CD3 delta chain (171 aa).

The first 21 residues, 1–21, serve as a signal peptide directing secretion; that stretch reads MEHSTFLSGLVLATLLSQVSP. The Extracellular portion of the chain corresponds to 22–105; it reads FKIPIEELED…CVELDPATVA (84 aa). Cysteine 37 and cysteine 73 form a disulfide bridge. N-linked (GlcNAc...) asparagine glycans are attached at residues asparagine 38 and asparagine 74. A helical transmembrane segment spans residues 106–126; sequence GIIVTDVIATLLLALGVFCFA. Residues 127-171 lie on the Cytoplasmic side of the membrane; it reads GHETGRLSGAADTQALLRNDQVYQPLRDRDDAQYSHLGGNWARNK. The region spanning 138–166 is the ITAM domain; it reads DTQALLRNDQVYQPLRDRDDAQYSHLGGN. 2 positions are modified to phosphotyrosine: tyrosine 149 and tyrosine 160.

In terms of assembly, the TCR-CD3 complex is composed of a CD3D/CD3E and a CD3G/CD3E heterodimers that preferentially associate with TCRalpha and TCRbeta, respectively, to form TCRalpha/CD3E/CD3G and TCRbeta/CD3G/CD3E trimers. In turn, the hexamer interacts with CD3Z homodimer to form the TCR-CD3 complex. Alternatively, TCRalpha and TCRbeta can be replaced by TCRgamma and TCRdelta. Interacts with coreceptors CD4 and CD8. In terms of processing, phosphorylated on Tyr residues after T-cell receptor triggering by LCK in association with CD4/CD8. CD3D is mostly present on T-lymphocytes with its TCR-CD3 partners. Present also in fetal NK-cells.

The protein resides in the cell membrane. Functionally, part of the TCR-CD3 complex present on T-lymphocyte cell surface that plays an essential role in adaptive immune response. When antigen presenting cells (APCs) activate T-cell receptor (TCR), TCR-mediated signals are transmitted across the cell membrane by the CD3 chains CD3D, CD3E, CD3G and CD3Z. All CD3 chains contain immunoreceptor tyrosine-based activation motifs (ITAMs) in their cytoplasmic domain. Upon TCR engagement, these motifs become phosphorylated by Src family protein tyrosine kinases LCK and FYN, resulting in the activation of downstream signaling pathways. In addition of this role of signal transduction in T-cell activation, CD3D plays an essential role in thymocyte differentiation. Indeed, participates in correct intracellular TCR-CD3 complex assembly and surface expression. In absence of a functional TCR-CD3 complex, thymocytes are unable to differentiate properly. Interacts with CD4 and CD8 and thus serves to establish a functional link between the TCR and coreceptors CD4 and CD8, which is needed for activation and positive selection of CD4 or CD8 T-cells. This is T-cell surface glycoprotein CD3 delta chain (CD3D) from Homo sapiens (Human).